Here is a 56-residue protein sequence, read N- to C-terminus: Large ribosomal subunit protein bL32 (56 aa).

The interval M1–E35 is disordered. Positions T9–L22 are enriched in basic residues.

Belongs to the bacterial ribosomal protein bL32 family.

In Blochmanniella pennsylvanica (strain BPEN), this protein is Large ribosomal subunit protein bL32.